A 470-amino-acid chain; its full sequence is Phosphoribosylamine--glycine ligase (470 aa).

An ATP-grasp domain is found at 115–354 (KDFLKRIGVP…MAEISMAVVE (240 aa)). Residue 142-203 (REKFNNGIVV…EERLRGIEVA (62 aa)) coordinates ATP. Mg(2+) contacts are provided by E324 and N326.

It belongs to the GARS family. Mg(2+) is required as a cofactor. Mn(2+) serves as cofactor.

The catalysed reaction is 5-phospho-beta-D-ribosylamine + glycine + ATP = N(1)-(5-phospho-beta-D-ribosyl)glycinamide + ADP + phosphate + H(+). The protein operates within purine metabolism; IMP biosynthesis via de novo pathway; N(1)-(5-phospho-D-ribosyl)glycinamide from 5-phospho-alpha-D-ribose 1-diphosphate: step 2/2. In Archaeoglobus fulgidus (strain ATCC 49558 / DSM 4304 / JCM 9628 / NBRC 100126 / VC-16), this protein is Phosphoribosylamine--glycine ligase (purD).